A 32-amino-acid polypeptide reads, in one-letter code: uncharacterized protein (32 aa).

This is an uncharacterized protein from Schizosaccharomyces pombe (strain 972 / ATCC 24843) (Fission yeast).